We begin with the raw amino-acid sequence, 1030 residues long: Eukaryotic translation initiation factor 3 subunit A (1030 aa).

The stretch at F94–E126 forms a coiled coil. Residues S308–F483 enclose the PCI domain. 2 coiled-coil regions span residues I527–I620 and I720–A772. Basic and acidic residues-rich tracts occupy residues R576–E591, E743–N771, R800–G931, G939–G985, and D1003–D1019. Disordered regions lie at residues R576–D603 and R737–Y1030.

The protein belongs to the eIF-3 subunit A family. In terms of assembly, component of the eukaryotic translation initiation factor 3 (eIF-3) complex.

It is found in the cytoplasm. Functionally, RNA-binding component of the eukaryotic translation initiation factor 3 (eIF-3) complex, which is involved in protein synthesis of a specialized repertoire of mRNAs and, together with other initiation factors, stimulates binding of mRNA and methionyl-tRNAi to the 40S ribosome. The eIF-3 complex specifically targets and initiates translation of a subset of mRNAs involved in cell proliferation. In Dictyostelium discoideum (Social amoeba), this protein is Eukaryotic translation initiation factor 3 subunit A (eif3A).